Consider the following 493-residue polypeptide: Probable malate:quinone oxidoreductase (493 aa).

The protein belongs to the MQO family. The cofactor is FAD.

The catalysed reaction is (S)-malate + a quinone = a quinol + oxaloacetate. It participates in carbohydrate metabolism; tricarboxylic acid cycle; oxaloacetate from (S)-malate (quinone route): step 1/1. The polypeptide is Probable malate:quinone oxidoreductase (Mycobacterium tuberculosis (strain ATCC 25177 / H37Ra)).